The chain runs to 510 residues: Pre-glycoprotein polyprotein GP complex (510 aa).

The N-myristoyl glycine; by host moiety is linked to residue Gly-2. Residues 2 to 17 are Extracellular-facing; sequence GQFITLMQSIPEALNM. Residues 18 to 32 form a helical membrane-spanning segment; sequence AFNVALVIVSLLCVT. Position 33 (Lys-33) is a topological domain, cytoplasmic. A helical transmembrane segment spans residues 34-53; sequence GLINLWKCGIIQLLMFLALA. Extracellular loops occupy residues 54-58 and 59-448; these read GRSCD and GEYK…ALAD. Residue Cys-57 coordinates Zn(2+). Residues Asn-75, Asn-90, Asn-101, Asn-112, Asn-117, Asn-122, Asn-133, Asn-182, Asn-218, and Asn-243 are each glycosylated (N-linked (GlcNAc...) asparagine; by host). 4 disulfide bridges follow: Cys-87–Cys-250, Cys-295–Cys-308, Cys-317–Cys-326, and Cys-380–Cys-401. Residues Asn-381, Asn-389, Asn-406, and Asn-411 are each glycosylated (N-linked (GlcNAc...) asparagine; by host). A helical membrane pass occupies residues 449–469; that stretch reads LCFWSLVFFTTTVFFQLIGIP. At 470-510 the chain is on the cytoplasmic side; it reads THRHLIGEGCPKPHRLTSNSLCSCGFYKIPKKPFRWVRKGK. His-471, His-473, Cys-479, His-483, Cys-491, and Cys-493 together coordinate Zn(2+).

This sequence belongs to the arenaviridae GPC protein family. In terms of assembly, homotetramer; disulfide-linked. Homotetramer. GP2 homotetramers bind through ionic interactions with GP1 homotetramers to form the GP complex together with the stable signal peptide. The GP-C polyprotein interacts with the host protease MBTPS1/SKI-1 resulting in the polyprotein processing. In terms of processing, specific enzymatic cleavages in vivo yield mature proteins. GP-C polyprotein is cleaved in the endoplasmic reticulum by the host protease MBTPS1. Only cleaved glycoprotein is incorporated into virions. Post-translationally, the SSP remains stably associated with the GP complex following cleavage by signal peptidase and plays crucial roles in the trafficking of GP through the secretory pathway. Myristoylation is necessary for GP2-mediated fusion activity.

The protein resides in the virion membrane. Its subcellular location is the host endoplasmic reticulum membrane. The protein localises to the host Golgi apparatus membrane. It is found in the host cell membrane. Its function is as follows. Class I viral fusion protein that directs fusion of viral and host endosomal membranes, leading to delivery of the nucleocapsid into the cytoplasm. Membrane fusion is mediated by irreversible conformational changes induced upon acidification in the endosome. Stable signal peptide (SSP): cleaved and functions as a signal peptide. In addition, it is also retained as the third component of the GP complex. The SSP is required for efficient glycoprotein expression, post-translational maturation cleavage of GP1 and GP2, glycoprotein transport to the cell surface plasma membrane, formation of infectious virus particles, and acid pH-dependent glycoprotein-mediated cell fusion. Functionally, interacts with the host receptor. This Pirital mammarenavirus (isolate Rat/Venezuela/VAV-488/1995) (PIRV) protein is Pre-glycoprotein polyprotein GP complex.